The following is a 269-amino-acid chain: Fructose-2,6-bisphosphatase TIGAR (269 aa).

His11 functions as the Tele-phosphohistidine intermediate in the catalytic mechanism. The active-site Proton donor/acceptor is Glu89.

It belongs to the phosphoglycerate mutase family. In terms of assembly, interacts with HK2; the interaction increases hexokinase HK2 activity in a hypoxia- and HIF1A-dependent manner, resulting in the regulation of mitochondrial membrane potential, thus increasing NADPH production and decreasing intracellular ROS levels. In terms of tissue distribution, expressed in olfactory bulb, cerebellum, and cortex. Expressed in neurons and astrocytes (at protein level). Expressed in intestinal crypt.

The protein localises to the cytoplasm. It localises to the nucleus. Its subcellular location is the mitochondrion. The catalysed reaction is beta-D-fructose 2,6-bisphosphate + H2O = beta-D-fructose 6-phosphate + phosphate. Its function is as follows. Fructose-bisphosphatase hydrolyzing fructose-2,6-bisphosphate as well as fructose-1,6-bisphosphate. Acts as a negative regulator of glycolysis by lowering intracellular levels of fructose-2,6-bisphosphate in a p53/TP53-dependent manner, resulting in the pentose phosphate pathway (PPP) activation and NADPH production. Contributes to the generation of reduced glutathione to cause a decrease in intracellular reactive oxygen species (ROS) content, correlating with its ability to protect cells from oxidative or metabolic stress-induced cell death. Plays a role in promoting protection against cell death during hypoxia by decreasing mitochondria ROS levels in a HK2-dependent manner through a mechanism that is independent of its fructose-bisphosphatase activity. In response to cardiac damage stress, mediates p53-induced inhibition of myocyte mitophagy through ROS levels reduction and the subsequent inactivation of BNIP3. Reduced mitophagy results in an enhanced apoptotic myocyte cell death, and exacerbates cardiac damage. Plays a role in adult intestinal regeneration; contributes to the growth, proliferation and survival of intestinal crypts following tissue ablation. Plays a neuroprotective role against ischemic brain damage by enhancing PPP flux and preserving mitochondria functions. Protects glioma cells from hypoxia- and ROS-induced cell death by inhibiting glycolysis and activating mitochondrial energy metabolism and oxygen consumption in a TKTL1-dependent and p53/TP53-independent manner. Plays a role in cancer cell survival by promoting DNA repair through activating PPP flux in a CDK5-ATM-dependent signaling pathway during hypoxia and/or genome stress-induced DNA damage responses. Involved in intestinal tumor progression. In Mus musculus (Mouse), this protein is Fructose-2,6-bisphosphatase TIGAR.